The chain runs to 265 residues: Tryptophan synthase alpha chain (265 aa).

Active-site proton acceptor residues include glutamate 48 and aspartate 59.

Belongs to the TrpA family. Tetramer of two alpha and two beta chains.

The enzyme catalyses (1S,2R)-1-C-(indol-3-yl)glycerol 3-phosphate + L-serine = D-glyceraldehyde 3-phosphate + L-tryptophan + H2O. The protein operates within amino-acid biosynthesis; L-tryptophan biosynthesis; L-tryptophan from chorismate: step 5/5. Its function is as follows. The alpha subunit is responsible for the aldol cleavage of indoleglycerol phosphate to indole and glyceraldehyde 3-phosphate. The sequence is that of Tryptophan synthase alpha chain from Vesicomyosocius okutanii subsp. Calyptogena okutanii (strain HA).